Reading from the N-terminus, the 221-residue chain is Casparian strip membrane protein 2 (221 aa).

A disordered region spans residues M1–K21. The Cytoplasmic segment spans residues M1–G41. A helical membrane pass occupies residues V42–I62. The Extracellular portion of the chain corresponds to T63–A89. The chain crosses the membrane as a helical span at residues F90–F110. The Cytoplasmic segment spans residues S111–D131. Residues T132–A152 traverse the membrane as a helical segment. Residues H153–I221 lie on the Extracellular side of the membrane.

The protein belongs to the Casparian strip membrane proteins (CASP) family. Homodimer and heterodimers.

It localises to the cell membrane. Functionally, regulates membrane-cell wall junctions and localized cell wall deposition. Required for establishment of the Casparian strip membrane domain (CSD) and the subsequent formation of Casparian strips, a cell wall modification of the root endodermis that determines an apoplastic barrier between the intraorganismal apoplasm and the extraorganismal apoplasm and prevents lateral diffusion. The sequence is that of Casparian strip membrane protein 2 from Erythranthe guttata (Yellow monkey flower).